The chain runs to 189 residues: Protein seele (189 aa).

The N-terminal stretch at 1-17 is a signal peptide; the sequence is MLTKALILFGLLALAQG. A Saposin B-type domain is found at 23–176; that stretch reads REVKCHVCKA…EQASYCDESP (154 aa). Disulfide bonds link Cys-27-Cys-172, Cys-30-Cys-165, and Cys-85-Cys-136. The Prevents secretion from ER motif lies at 186–189; it reads KEEL.

It belongs to the canopy family.

The protein resides in the endoplasmic reticulum. Its function is as follows. Involved in embryonic dorsal-ventral patterning which is generated by a series of serine protease processing events where gd processes snk which cleaves ea which then processes spz into the activating ligand for the Toll receptor. Required during this process for the secretion of ea from the developing embryo into the perivitelline space and for ea processing. This chain is Protein seele, found in Drosophila melanogaster (Fruit fly).